Consider the following 89-residue polypeptide: Small ribosomal subunit protein bS20 (89 aa).

The tract at residues 1 to 20 (MANHKSAEKRARQTIKRTER) is disordered.

The protein belongs to the bacterial ribosomal protein bS20 family.

In terms of biological role, binds directly to 16S ribosomal RNA. This chain is Small ribosomal subunit protein bS20, found in Campylobacter concisus (strain 13826).